The chain runs to 156 residues: Male-specific protein scotti (156 aa).

The disordered stretch occupies residues 26–48; the sequence is TADAGDDADTLEDGQQQQQQQHQ. The N-linked (GlcNAc...) asparagine glycan is linked to N137.

This sequence belongs to the male-specific scotti family.

Its function is as follows. Post-meiotically transcribed gene that has a role in late spermiogenesis; required for actin cone progression during spermatid individualization. This is Male-specific protein scotti from Drosophila erecta (Fruit fly).